Here is a 225-residue protein sequence, read N- to C-terminus: Adenosylcobinamide-GDP ribazoletransferase (225 aa).

5 helical membrane passes run 34–54 (FVGI…FWFL), 93–113 (NLGT…FYSF), 116–136 (VSAF…LLLL), 165–185 (PLLL…AITI), and 204–224 (VVGA…YFLA).

It belongs to the CobS family. The cofactor is Mg(2+).

The protein resides in the cell membrane. It carries out the reaction alpha-ribazole + adenosylcob(III)inamide-GDP = adenosylcob(III)alamin + GMP + H(+). The catalysed reaction is alpha-ribazole 5'-phosphate + adenosylcob(III)inamide-GDP = adenosylcob(III)alamin 5'-phosphate + GMP + H(+). Its pathway is cofactor biosynthesis; adenosylcobalamin biosynthesis; adenosylcobalamin from cob(II)yrinate a,c-diamide: step 7/7. Joins adenosylcobinamide-GDP and alpha-ribazole to generate adenosylcobalamin (Ado-cobalamin). Also synthesizes adenosylcobalamin 5'-phosphate from adenosylcobinamide-GDP and alpha-ribazole 5'-phosphate. The protein is Adenosylcobinamide-GDP ribazoletransferase (cobS1) of Archaeoglobus fulgidus (strain ATCC 49558 / DSM 4304 / JCM 9628 / NBRC 100126 / VC-16).